The chain runs to 469 residues: 24-hydroxycholesterol 7-alpha-hydroxylase (469 aa).

The signal sequence occupies residues 1–23; sequence MELISPTVIIILGCLALFLLLQR. A run of 3 helical transmembrane segments spans residues 267-287, 352-372, and 412-432; these read GLLLLWASLSNAVPVAFWTLA, VEILNYIIPSGDLLMLSPFWL, and FQCPARWFALLEVQMCIILIL. Cys-414 lines the heme pocket.

The protein belongs to the cytochrome P450 family. Heme serves as cofactor. As to expression, liver specific.

It localises to the endoplasmic reticulum membrane. It is found in the microsome membrane. It catalyses the reaction (24S)-hydroxycholesterol + reduced [NADPH--hemoprotein reductase] + O2 = (24S)-7alpha-dihydroxycholesterol + oxidized [NADPH--hemoprotein reductase] + H2O + H(+). It participates in steroid metabolism; cholesterol degradation. It functions in the pathway lipid metabolism; bile acid biosynthesis. Its function is as follows. A cytochrome P450 monooxygenase involved in neural cholesterol clearance through bile acid synthesis. Catalyzes 7-alpha hydroxylation of (24S)-hydroxycholesterol, a neural oxysterol that is metabolized to bile acids in the liver. Mechanistically, uses molecular oxygen inserting one oxygen atom into a substrate, and reducing the second into a water molecule, with two electrons provided by NADPH via cytochrome P450 reductase (CPR; NADPH-ferrihemoprotein reductase). This chain is 24-hydroxycholesterol 7-alpha-hydroxylase, found in Homo sapiens (Human).